We begin with the raw amino-acid sequence, 440 residues long: Trigger factor (440 aa).

One can recognise a PPIase FKBP-type domain in the interval 162–247; it reads GDRVTFDFTG…LKKIEKFQLP (86 aa).

Belongs to the FKBP-type PPIase family. Tig subfamily.

It localises to the cytoplasm. The enzyme catalyses [protein]-peptidylproline (omega=180) = [protein]-peptidylproline (omega=0). In terms of biological role, involved in protein export. Acts as a chaperone by maintaining the newly synthesized protein in an open conformation. Functions as a peptidyl-prolyl cis-trans isomerase. In Hamiltonella defensa subsp. Acyrthosiphon pisum (strain 5AT), this protein is Trigger factor.